A 307-amino-acid polypeptide reads, in one-letter code: Recombination-associated protein RdgC (307 aa).

The protein belongs to the RdgC family.

The protein localises to the cytoplasm. The protein resides in the nucleoid. May be involved in recombination. The chain is Recombination-associated protein RdgC from Burkholderia cenocepacia (strain ATCC BAA-245 / DSM 16553 / LMG 16656 / NCTC 13227 / J2315 / CF5610) (Burkholderia cepacia (strain J2315)).